The chain runs to 345 residues: UDP-N-acetylenolpyruvoylglucosamine reductase (345 aa).

The 171-residue stretch at 27-197 folds into the FAD-binding PCMH-type domain; that stretch reads FDASAELAYE…TKVVFKLPKQ (171 aa). Residue Arg174 is part of the active site. The active-site Proton donor is the Ser245. The active site involves Glu341.

The protein belongs to the MurB family. FAD serves as cofactor.

The protein resides in the cytoplasm. The enzyme catalyses UDP-N-acetyl-alpha-D-muramate + NADP(+) = UDP-N-acetyl-3-O-(1-carboxyvinyl)-alpha-D-glucosamine + NADPH + H(+). The protein operates within cell wall biogenesis; peptidoglycan biosynthesis. Functionally, cell wall formation. This is UDP-N-acetylenolpyruvoylglucosamine reductase from Polynucleobacter asymbioticus (strain DSM 18221 / CIP 109841 / QLW-P1DMWA-1) (Polynucleobacter necessarius subsp. asymbioticus).